We begin with the raw amino-acid sequence, 266 residues long: Type III pantothenate kinase (266 aa).

6–13 (DIGNSRIK) lines the ATP pocket. Substrate contacts are provided by residues Tyr-94 and 101–104 (GIDR). Asp-103 functions as the Proton acceptor in the catalytic mechanism. Asp-128 serves as a coordination point for K(+). Thr-131 serves as a coordination point for ATP. Thr-183 lines the substrate pocket.

This sequence belongs to the type III pantothenate kinase family. In terms of assembly, homodimer. NH4(+) is required as a cofactor. The cofactor is K(+).

It localises to the cytoplasm. The catalysed reaction is (R)-pantothenate + ATP = (R)-4'-phosphopantothenate + ADP + H(+). The protein operates within cofactor biosynthesis; coenzyme A biosynthesis; CoA from (R)-pantothenate: step 1/5. Its function is as follows. Catalyzes the phosphorylation of pantothenate (Pan), the first step in CoA biosynthesis. This is Type III pantothenate kinase from Nitrosococcus oceani (strain ATCC 19707 / BCRC 17464 / JCM 30415 / NCIMB 11848 / C-107).